We begin with the raw amino-acid sequence, 555 residues long: Dihydroxy-acid dehydratase (555 aa).

Residue Asp-78 coordinates Mg(2+). Cys-119 contacts [2Fe-2S] cluster. Positions 120 and 121 each coordinate Mg(2+). Position 121 is an N6-carboxylysine (Lys-121). [2Fe-2S] cluster is bound at residue Cys-192. Residue Glu-444 coordinates Mg(2+). Residue Ser-470 is the Proton acceptor of the active site.

The protein belongs to the IlvD/Edd family. In terms of assembly, homodimer. Requires [2Fe-2S] cluster as cofactor. Mg(2+) serves as cofactor.

It catalyses the reaction (2R)-2,3-dihydroxy-3-methylbutanoate = 3-methyl-2-oxobutanoate + H2O. The catalysed reaction is (2R,3R)-2,3-dihydroxy-3-methylpentanoate = (S)-3-methyl-2-oxopentanoate + H2O. It functions in the pathway amino-acid biosynthesis; L-isoleucine biosynthesis; L-isoleucine from 2-oxobutanoate: step 3/4. It participates in amino-acid biosynthesis; L-valine biosynthesis; L-valine from pyruvate: step 3/4. Its function is as follows. Functions in the biosynthesis of branched-chain amino acids. Catalyzes the dehydration of (2R,3R)-2,3-dihydroxy-3-methylpentanoate (2,3-dihydroxy-3-methylvalerate) into 2-oxo-3-methylpentanoate (2-oxo-3-methylvalerate) and of (2R)-2,3-dihydroxy-3-methylbutanoate (2,3-dihydroxyisovalerate) into 2-oxo-3-methylbutanoate (2-oxoisovalerate), the penultimate precursor to L-isoleucine and L-valine, respectively. This Halalkalibacterium halodurans (strain ATCC BAA-125 / DSM 18197 / FERM 7344 / JCM 9153 / C-125) (Bacillus halodurans) protein is Dihydroxy-acid dehydratase.